The primary structure comprises 92 residues: Large ribosomal subunit protein bL31 (92 aa).

Positions 66-92 (GMGSANPDVDAPAPKKAAKKSDAESDS) are disordered. The span at 70–80 (ANPDVDAPAPK) shows a compositional bias: low complexity.

This sequence belongs to the bacterial ribosomal protein bL31 family. Type A subfamily. As to quaternary structure, part of the 50S ribosomal subunit.

In terms of biological role, binds the 23S rRNA. This chain is Large ribosomal subunit protein bL31, found in Synechococcus sp. (strain RCC307).